Reading from the N-terminus, the 413-residue chain is uncharacterized protein (413 aa).

2 disordered regions span residues 108–158 and 232–257; these read ESVP…SKIS and DRLG…RLGA. Position 115 is a phosphoserine (Ser-115). The segment covering 127-139 has biased composition (polar residues); it reads SAASRMIANSLNH. Phosphoserine is present on Ser-141. Lys-239 participates in a covalent cross-link: Glycyl lysine isopeptide (Lys-Gly) (interchain with G-Cter in SUMO2). Residues Ser-269 and Ser-296 each carry the phosphoserine modification. Residues 290-336 are disordered; that stretch reads RGPTKASAQPALTVKAKAASSATSTATTPKLRRLALPSRPGLQKKPD. Over residues 302 to 318 the composition is skewed to low complexity; that stretch reads TVKAKAASSATSTATTP. Ser-342 bears the Phosphoserine mark.

This is an uncharacterized protein from Mus musculus (Mouse).